The following is a 145-amino-acid chain: D-aminoacyl-tRNA deacylase (145 aa).

Residues 137–138 carry the Gly-cisPro motif, important for rejection of L-amino acids motif; the sequence is GP.

Belongs to the DTD family. Homodimer.

It is found in the cytoplasm. The enzyme catalyses glycyl-tRNA(Ala) + H2O = tRNA(Ala) + glycine + H(+). The catalysed reaction is a D-aminoacyl-tRNA + H2O = a tRNA + a D-alpha-amino acid + H(+). Its function is as follows. An aminoacyl-tRNA editing enzyme that deacylates mischarged D-aminoacyl-tRNAs. Also deacylates mischarged glycyl-tRNA(Ala), protecting cells against glycine mischarging by AlaRS. Acts via tRNA-based rather than protein-based catalysis; rejects L-amino acids rather than detecting D-amino acids in the active site. By recycling D-aminoacyl-tRNA to D-amino acids and free tRNA molecules, this enzyme counteracts the toxicity associated with the formation of D-aminoacyl-tRNA entities in vivo and helps enforce protein L-homochirality. In Shewanella sediminis (strain HAW-EB3), this protein is D-aminoacyl-tRNA deacylase.